Consider the following 1058-residue polypeptide: Kinesin-like protein KIN-7M, chloroplastic (1058 aa).

The transit peptide at 1-60 (MASSSSRTRSRSPFSHRRPPSPYSSASSTSSSLINNRLLPRSSSTPTSTVYNSGGVTGSR) directs the protein to the chloroplast. The disordered stretch occupies residues 1 to 92 (MASSSSRTRS…QSYPSEGLIG (92 aa)). Basic residues predominate over residues 8–19 (TRSRSPFSHRRP). Residues 23–49 (YSSASSTSSSLINNRLLPRSSSTPTST) show a composition bias toward low complexity. Positions 50-70 (VYNSGGVTGSRSMSITRTISD) are enriched in polar residues. Residues 104–421 (SISVTVRFRP…LKFASRAKRI (318 aa)) enclose the Kinesin motor domain. 184-191 (GVTSSGKT) serves as a coordination point for ATP. A coiled-coil region spans residues 422–509 (EINASRNKII…QKLTKLILVS (88 aa)). The segment at 549-578 (PSSTLSLASDARRSSSKFKDENSPVGSRAE) is disordered. Residues 558-570 (DARRSSSKFKDEN) are compositionally biased toward basic and acidic residues. Coiled-coil stretches lie at residues 621–658 (PENS…ASIA), 704–826 (NNEL…AQKR), 873–904 (LEAA…LEND), and 935–999 (KEDE…SQAA). A compositionally biased stretch (low complexity) spans 824–838 (QKRNNNSMNSAANRN). The tract at residues 824–847 (QKRNNNSMNSAANRNGTRPGRKAR) is disordered. Positions 922–946 (ALSIQKSDEAEPAKEDEVTELDNKN) are disordered. Positions 927–946 (KSDEAEPAKEDEVTELDNKN) are enriched in basic and acidic residues. The RING-type zinc finger occupies 1011 to 1046 (CKVCFESPTATILLPCRHFCLCKSCSLACSECPICR).

This sequence belongs to the TRAFAC class myosin-kinesin ATPase superfamily. Kinesin family. KIN-7 subfamily.

The protein localises to the plastid. Its subcellular location is the chloroplast. The protein is Kinesin-like protein KIN-7M, chloroplastic of Arabidopsis thaliana (Mouse-ear cress).